The following is a 304-amino-acid chain: Small glutamine-rich tetratricopeptide repeat-containing protein beta (304 aa).

4 TPR repeats span residues 15–49 (LREQSQMDAYTSDEQESLEVAIQCLETVFKISPED), 85–118 (ADQLKDEGNNHMKEENYAAAVDCYTQAIELDPNN), 120–152 (VYYCNRAAAQSKLSHYTDAIKDCEKAIAIDSKY), and 153–186 (SKAYGRMGLALTAMNKFEEAVTSYQKALDLDPEN). An N6-acetyllysine modification is found at lysine 131. Residues serine 293, serine 295, and serine 297 each carry the phosphoserine modification.

Belongs to the SGT family. In terms of assembly, homooligomerize.

In terms of biological role, co-chaperone that binds directly to HSC70 and HSP70 and regulates their ATPase activity. In Mus musculus (Mouse), this protein is Small glutamine-rich tetratricopeptide repeat-containing protein beta (Sgtb).